Reading from the N-terminus, the 437-residue chain is Eukaryotic peptide chain release factor subunit 1 (437 aa).

Residue Q182 is modified to N5-methylglutamine. Residue K331 forms a Glycyl lysine isopeptide (Lys-Gly) (interchain with G-Cter in ubiquitin) linkage. S421 is modified (phosphoserine).

This sequence belongs to the eukaryotic release factor 1 family. As to quaternary structure, component of the eRF1-eRF3-GTP ternary complex, composed of SUP45/eRF1, SUP35/eRF3 and GTP. Interacts with TPA1. In terms of processing, N5-methylated on Gln-182 by MTQ2.

The protein resides in the cytoplasm. Functionally, component of the eRF1-eRF3-GTP ternary complex, a ternary complex that mediates translation termination in response to the termination codons. The eRF1-eRF3-GTP complex binds to a stop codon in the ribosomal A-site. SUP45/eRF1 is responsible for stop codon recognition and inducing hydrolysis of peptidyl-tRNA. Following GTP hydrolysis by SUP35/eRF3, SUP35/eRF3 dissociates, permitting SUP45/eRF1 to accommodate fully in the A-site and mediate hydrolysis of peptidyl-tRNA. The chain is Eukaryotic peptide chain release factor subunit 1 (SUP45) from Saccharomyces cerevisiae (strain ATCC 204508 / S288c) (Baker's yeast).